Here is a 917-residue protein sequence, read N- to C-terminus: MLX-interacting protein (917 aa).

The tract at residues 1–72 is disordered; the sequence is MAADVFMCSP…AGPGREEPPR (72 aa). Residue alanine 2 is modified to N-acetylalanine. Phosphoserine occurs at positions 9, 33, and 39. Residues 27-37 show a composition bias toward acidic residues; the sequence is PEDDDDSDTDE. Over residues 47-57 the composition is skewed to low complexity; that stretch reads ATSARAHASAA. The required for cytoplasmic localization stretch occupies residues 73-327; sequence RQQIIHSGHF…PLQPNLDFMD (255 aa). The segment at 322-445 is transactivation domain; that stretch reads NLDFMDTFEP…LLSPGPAPAP (124 aa). Disordered stretches follow at residues 347–402 and 632–711; these read LPPP…CERT and SHST…TDPK. The segment covering 378-388 has biased composition (polar residues); sequence LPNSLITSSAA. The span at 632–643 shows a compositional bias: low complexity; that stretch reads SHSTSSQPSPVS. Serine 667 bears the Phosphoserine mark. Residues 670–685 are compositionally biased toward polar residues; the sequence is VPATGSSRDCPNSGQA. A compositionally biased stretch (low complexity) spans 686-704; sequence SPCPSEQSPSPQSPQNNCS. The region spanning 717–767 is the bHLH domain; that stretch reads KNRQKHISAEQKRRFNIRMGFNTLNSLISNNSKQTSHAITLQKTMEYITKL. The interval 767 to 788 is leucine-zipper; it reads LQQERMQMQEEARRLREEIEEL. A mediates heterotypic interactions between MLXIP and MLX and is required for cytoplasmic localization region spans residues 830–879; the sequence is WKFWIFSMIIKPLFESFKGMVSTSSLEEFHRTALSWLDQHCSLPVLRPMV. The disordered stretch occupies residues 897-917; sequence SQLPEQASEAVTRMGKRSGES.

Efficient DNA binding requires dimerization with another bHLH protein. Binds DNA as a homodimer or a heterodimer with MLX/TCFL4.

It localises to the cytoplasm. It is found in the nucleus. The protein localises to the mitochondrion outer membrane. Functionally, binds DNA as a heterodimer with MLX/TCFL4 and activates transcription. Binds to the canonical E box sequence 5'-CACGTG-3'. Plays a role in transcriptional activation of glycolytic target genes. Involved in glucose-responsive gene regulation. Regulates transcription in response to changes in cellular carbohydrate abundance such as occurs during fasting to feeding metabolic transition. Refeeding stimulates MLXIPL/ChREBP transcription factor, leading to increased BCKDK to PPM1K expression ratio, phosphorylation and activation of ACLY that ultimately results in the generation of malonyl-CoA and oxaloacetate immediate substrates of de novo lipogenesis and gluconeogenesis, respectively. This Mus musculus (Mouse) protein is MLX-interacting protein.